The primary structure comprises 287 residues: Lipoyl synthase (287 aa).

The [4Fe-4S] cluster site is built by cysteine 38, cysteine 43, cysteine 49, cysteine 64, cysteine 68, cysteine 71, and serine 277. A Radical SAM core domain is found at 50-266; it reads WSRGTATFLL…KTVAESLGLR (217 aa).

It belongs to the radical SAM superfamily. Lipoyl synthase family. The cofactor is [4Fe-4S] cluster.

It is found in the cytoplasm. It catalyses the reaction [[Fe-S] cluster scaffold protein carrying a second [4Fe-4S](2+) cluster] + N(6)-octanoyl-L-lysyl-[protein] + 2 oxidized [2Fe-2S]-[ferredoxin] + 2 S-adenosyl-L-methionine + 4 H(+) = [[Fe-S] cluster scaffold protein] + N(6)-[(R)-dihydrolipoyl]-L-lysyl-[protein] + 4 Fe(3+) + 2 hydrogen sulfide + 2 5'-deoxyadenosine + 2 L-methionine + 2 reduced [2Fe-2S]-[ferredoxin]. Its pathway is protein modification; protein lipoylation via endogenous pathway; protein N(6)-(lipoyl)lysine from octanoyl-[acyl-carrier-protein]: step 2/2. Its function is as follows. Catalyzes the radical-mediated insertion of two sulfur atoms into the C-6 and C-8 positions of the octanoyl moiety bound to the lipoyl domains of lipoate-dependent enzymes, thereby converting the octanoylated domains into lipoylated derivatives. The chain is Lipoyl synthase from Chlorobium phaeobacteroides (strain DSM 266 / SMG 266 / 2430).